The sequence spans 94 residues: RNA-binding protein Hfq (94 aa).

Residues 9–68 (DPFLNALRRERVPVSIYLVNGIKLQGQVESFDQFVILLKNTVSQMVYKHAISTVVPARPF) enclose the Sm domain. The segment at 70-94 (VSAHHSSPAPTPAGGFNGQNDETSE) is disordered.

The protein belongs to the Hfq family. As to quaternary structure, homohexamer.

Functionally, RNA chaperone that binds small regulatory RNA (sRNAs) and mRNAs to facilitate mRNA translational regulation in response to envelope stress, environmental stress and changes in metabolite concentrations. Also binds with high specificity to tRNAs. The chain is RNA-binding protein Hfq from Shewanella woodyi (strain ATCC 51908 / MS32).